A 538-amino-acid polypeptide reads, in one-letter code: MFPKTSFTSLIVGVFLLYVLHTCWVMYGIVYTKPCEKRRAESCISPYLAAKPRLQLSVYTALRPNADGGHSLIHREEEFDVNTKFEKLVNVSLPKKTRKNGTLYAMVFLHQAGVSPWQDPHQVHLVTQLTTYMLPKPPEISLITGQDEPEKPDQQKQSSDSELDRPVSHWRSRLTLNVVSENFLFDREALPGDVHRYMRVYQSGKKMIYLPLLFVDELSNRVKDLMEINSSSTELPLTITYDSIALGKLRFWIHMQDAVYSLQQFGFTEKDADEIKGIFVDTNLYFLALTFFVAAFHLLFDFLAFKNDISFWKHKKSMVGMSSKAVLWRCFSTIVIFLYLLDEQTSLLVLVPAGIGSLIEVWKVKKAFKIHVIWRGLTPTFLFGKLDESEKRTEEYDTLAMKYLSYLLYPLCVGGAVYALVFVKYKSWYSWIINSLVNGVYAFGFLFMLPQLFVNYKLKSVAHLPWKAFMYKAFNTFIDDVFAFIITMPTSHRLACFRDDVVFLVYLYQRWLYPVDRSRVNEYGVSYDEKPKGKSHED.

The Cytoplasmic segment spans residues 1-9 (MFPKTSFTS). The helical transmembrane segment at 10–30 (LIVGVFLLYVLHTCWVMYGIV) threads the bilayer. The Extracellular segment spans residues 31–284 (YTKPCEKRRA…IKGIFVDTNL (254 aa)). N-linked (GlcNAc...) asparagine glycans are attached at residues Asn-90 and Asn-100. The tract at residues 140 to 166 (ISLITGQDEPEKPDQQKQSSDSELDRP) is disordered. Residue Asn-229 is glycosylated (N-linked (GlcNAc...) asparagine). Residues 285-305 (YFLALTFFVAAFHLLFDFLAF) traverse the membrane as a helical segment. Over 306 to 324 (KNDISFWKHKKSMVGMSSK) the chain is Cytoplasmic. Residues 325–341 (AVLWRCFSTIVIFLYLL) form a helical membrane-spanning segment. At 342-402 (DEQTSLLVLV…TEEYDTLAMK (61 aa)) the chain is on the extracellular side. Residues 403 to 423 (YLSYLLYPLCVGGAVYALVFV) form a helical membrane-spanning segment. Over 424 to 428 (KYKSW) the chain is Cytoplasmic. Residues 429–449 (YSWIINSLVNGVYAFGFLFML) form a helical membrane-spanning segment. The Extracellular portion of the chain corresponds to 450 to 538 (PQLFVNYKLK…EKPKGKSHED (89 aa)).

It belongs to the CLPTM1 family.

Its subcellular location is the endoplasmic reticulum membrane. The enzyme catalyses a 6-(alpha-D-glucosaminyl)-1-(1,2-diacyl-sn-glycero-3-phospho)-1D-myo-inositol(in) = a 6-(alpha-D-glucosaminyl)-1-(1,2-diacyl-sn-glycero-3-phospho)-1D-myo-inositol(out). The catalysed reaction is 6-(alpha-D-glucosaminyl)-(1-octadecanoyl,2-(9Z)-octadecenoyl-sn-glycero-3-phospho)-1D-myo-inositol(in) = 6-(alpha-D-glucosaminyl)-(1-octadecanoyl,2-(9Z)-octadecenoyl-sn-glycero-3-phospho)-1D-myo-inositol(out). It catalyses the reaction a 1,2-diacyl-sn-glycero-3-phospho-(1D-myo-inositol)(in) = a 1,2-diacyl-sn-glycero-3-phospho-(1D-myo-inositol)(out). It carries out the reaction a 1,2-diacyl-sn-glycero-3-phosphocholine(in) = a 1,2-diacyl-sn-glycero-3-phosphocholine(out). The enzyme catalyses a 1,2-diacyl-sn-glycero-3-phosphoethanolamine(in) = a 1,2-diacyl-sn-glycero-3-phosphoethanolamine(out). In terms of biological role, scramblase that mediates the translocation of glucosaminylphosphatidylinositol (alpha-D-GlcN-(1-6)-(1,2-diacyl-sn-glycero-3-phospho)-1D-myo-inositol, GlcN-PI) across the endoplasmic reticulum (ER) membrane, from the cytosolic leaflet to the luminal leaflet of the ER membrane, where it participates in the biosynthesis of glycosylphosphatidylinositol (GPI). GPI is a lipid glycoconjugate involved in post-translational modification of proteins. Can also translocate 1,2-diacyl-sn-glycero-3-phospho-(1D-myo-inositol) (phosphatidylinositol or PI), as well as several other phospholipids (1,2-diacyl-sn-glycero-3-phosphocholine, 1,2-diacyl-sn-glycero-3-phosphoethanolamine), and N-acetylglucosaminylphosphatidylinositol (GlcNAc-PI) in vitro. The chain is Lipid scramblase CLPTM1L (clptm1l) from Danio rerio (Zebrafish).